The chain runs to 114 residues: Hydrogenase maturation factor HypA (114 aa).

Histidine 2 is a Ni(2+) binding site. Residues cysteine 73, cysteine 76, cysteine 89, and cysteine 92 each coordinate Zn(2+).

The protein belongs to the HypA/HybF family.

Involved in the maturation of [NiFe] hydrogenases. Required for nickel insertion into the metal center of the hydrogenase. This Syntrophus aciditrophicus (strain SB) protein is Hydrogenase maturation factor HypA.